Here is a 94-residue protein sequence, read N- to C-terminus: Putative pterin-4-alpha-carbinolamine dehydratase (94 aa).

It belongs to the pterin-4-alpha-carbinolamine dehydratase family.

It carries out the reaction (4aS,6R)-4a-hydroxy-L-erythro-5,6,7,8-tetrahydrobiopterin = (6R)-L-erythro-6,7-dihydrobiopterin + H2O. The polypeptide is Putative pterin-4-alpha-carbinolamine dehydratase (Mycobacterium leprae (strain Br4923)).